The following is a 213-amino-acid chain: Cytochrome c biogenesis ATP-binding export protein CcmA (213 aa).

Positions 11–213 constitute an ABC transporter domain; the sequence is LTARNLECIR…TVTVHHLVLS (203 aa). 43–50 is a binding site for ATP; sequence GPNGSGKT.

The protein belongs to the ABC transporter superfamily. CcmA exporter (TC 3.A.1.107) family. As to quaternary structure, the complex is composed of two ATP-binding proteins (CcmA) and two transmembrane proteins (CcmB).

It is found in the cell inner membrane. It carries out the reaction heme b(in) + ATP + H2O = heme b(out) + ADP + phosphate + H(+). Its function is as follows. Part of the ABC transporter complex CcmAB involved in the biogenesis of c-type cytochromes; once thought to export heme, this seems not to be the case, but its exact role is uncertain. Responsible for energy coupling to the transport system. This chain is Cytochrome c biogenesis ATP-binding export protein CcmA, found in Nitrosomonas europaea (strain ATCC 19718 / CIP 103999 / KCTC 2705 / NBRC 14298).